Reading from the N-terminus, the 527-residue chain is Bifunctional purine biosynthesis protein PurH (527 aa).

Positions 1–149 (MASDFLPVRR…KNFARVAVAT (149 aa)) constitute an MGS-like domain.

It belongs to the PurH family.

It carries out the reaction (6R)-10-formyltetrahydrofolate + 5-amino-1-(5-phospho-beta-D-ribosyl)imidazole-4-carboxamide = 5-formamido-1-(5-phospho-D-ribosyl)imidazole-4-carboxamide + (6S)-5,6,7,8-tetrahydrofolate. The catalysed reaction is IMP + H2O = 5-formamido-1-(5-phospho-D-ribosyl)imidazole-4-carboxamide. It functions in the pathway purine metabolism; IMP biosynthesis via de novo pathway; 5-formamido-1-(5-phospho-D-ribosyl)imidazole-4-carboxamide from 5-amino-1-(5-phospho-D-ribosyl)imidazole-4-carboxamide (10-formyl THF route): step 1/1. The protein operates within purine metabolism; IMP biosynthesis via de novo pathway; IMP from 5-formamido-1-(5-phospho-D-ribosyl)imidazole-4-carboxamide: step 1/1. This is Bifunctional purine biosynthesis protein PurH from Xanthomonas oryzae pv. oryzae (strain PXO99A).